Here is an 825-residue protein sequence, read N- to C-terminus: Ent-copalyl diphosphate synthase 2, chloroplastic (825 aa).

The transit peptide at 1–70 directs the protein to the chloroplast; the sequence is MVLSSSCTTV…KGSSLTPIVR (70 aa). K241 contributes to the substrate binding site. The short motif at 373-376 is the DXDD motif element; the sequence is EVDD. K459 provides a ligand contact to substrate.

The protein belongs to the terpene synthase family. Tpsc subfamily. Mg(2+) serves as cofactor. Expressed in tassels.

It localises to the plastid. The protein resides in the chloroplast. It catalyses the reaction (2E,6E,10E)-geranylgeranyl diphosphate = ent-copalyl diphosphate. It participates in plant hormone biosynthesis; gibberellin biosynthesis. Involved in gibberellin biosynthesis. Catalyzes the conversion of geranylgeranyl diphosphate to the gibberellin precursor ent-copalyl diphosphate (ent-CPP). Involved in the production of antifungal dolabralexin phytoalexins in response to biotic and abiotic stresses. In response to fungal infection and in associtation with KSL4, is involved in the production dolabradiene, a type of antifungal phytoalexin. The polypeptide is Ent-copalyl diphosphate synthase 2, chloroplastic (Zea mays (Maize)).